We begin with the raw amino-acid sequence, 219 residues long: Vesicle-associated membrane protein 711 (219 aa).

Ala2 is modified (N-acetylalanine). Residues 2–189 are Cytoplasmic-facing; the sequence is AILYALVARG…RSNVWWRNCK (188 aa). In terms of domain architecture, Longin spans 7 to 111; it reads LVARGTVVLS…AMNEEFSRVL (105 aa). In terms of domain architecture, v-SNARE coiled-coil homology spans 126-186; that stretch reads RINRIKGEMN…RRFRSNVWWR (61 aa). Residues 190 to 210 form a helical; Anchor for type IV membrane protein membrane-spanning segment; the sequence is LTVLLILLLLVIIYIAVAFLC. The Vesicular portion of the chain corresponds to 211 to 219; sequence HGPTLPSCI.

Belongs to the synaptobrevin family. As to expression, expressed in flowers, leaves, stems and roots.

The protein resides in the vacuole membrane. It localises to the prevacuolar compartment membrane. Functionally, involved in the targeting and/or fusion of transport vesicles to their target membrane. This chain is Vesicle-associated membrane protein 711, found in Arabidopsis thaliana (Mouse-ear cress).